Here is a 135-residue protein sequence, read N- to C-terminus: Small ribosomal subunit protein bS16m (135 aa).

The N-terminal 34 residues, 1–34, are a transit peptide targeting the mitochondrion; sequence MVQLTTIFCKAYHGGHLTIRLALGGCTNRPFYRI.

This sequence belongs to the bacterial ribosomal protein bS16 family. In terms of assembly, component of the mitochondrial ribosome small subunit (28S) which comprises a 12S rRNA and about 30 distinct proteins.

Its subcellular location is the mitochondrion. The chain is Small ribosomal subunit protein bS16m (Mrps16) from Mus musculus (Mouse).